Here is a 328-residue protein sequence, read N- to C-terminus: Phenylalanine--tRNA ligase alpha subunit (328 aa).

Glutamate 245 is a Mg(2+) binding site.

Belongs to the class-II aminoacyl-tRNA synthetase family. Phe-tRNA synthetase alpha subunit type 1 subfamily. In terms of assembly, tetramer of two alpha and two beta subunits. It depends on Mg(2+) as a cofactor.

Its subcellular location is the cytoplasm. It catalyses the reaction tRNA(Phe) + L-phenylalanine + ATP = L-phenylalanyl-tRNA(Phe) + AMP + diphosphate + H(+). In Helicobacter pylori (strain ATCC 700392 / 26695) (Campylobacter pylori), this protein is Phenylalanine--tRNA ligase alpha subunit (pheS).